A 61-amino-acid polypeptide reads, in one-letter code: UPF0434 protein Avin_14770 (61 aa).

Belongs to the UPF0434 family.

The polypeptide is UPF0434 protein Avin_14770 (Azotobacter vinelandii (strain DJ / ATCC BAA-1303)).